The sequence spans 316 residues: L-lactate dehydrogenase 3 (316 aa).

Positions 16, 37, 42, and 68 each coordinate NAD(+). Arg91 provides a ligand contact to substrate. NAD(+) is bound by residues Ser104, 121–123 (ASN), and Thr146. 123 to 126 (NPVD) contributes to the substrate binding site. Residue 151–154 (DSSR) participates in substrate binding. The beta-D-fructose 1,6-bisphosphate site is built by Arg156 and His171. The active-site Proton acceptor is His178. Position 233 (Thr233) interacts with substrate.

This sequence belongs to the LDH/MDH superfamily. LDH family. In terms of assembly, homotetramer.

It is found in the cytoplasm. The catalysed reaction is (S)-lactate + NAD(+) = pyruvate + NADH + H(+). It participates in fermentation; pyruvate fermentation to lactate; (S)-lactate from pyruvate: step 1/1. With respect to regulation, allosterically activated by fructose 1,6-bisphosphate (FBP). Its function is as follows. Catalyzes the conversion of lactate to pyruvate. The chain is L-lactate dehydrogenase 3 from Bacillus cereus (strain ATCC 10987 / NRS 248).